Reading from the N-terminus, the 460-residue chain is Beta-1,3-xylanase TXYA (460 aa).

A signal peptide spans M1–A22. The region spanning L23–S337 is the GH26 domain. Residue E138 is the Proton donor of the active site. E234 acts as the Nucleophile in catalysis. The segment at G347 to E371 is disordered. A compositionally biased stretch (gly residues) spans N348–G366. Residues E368 to N460 are carbohydrate binding module (CBM). Disulfide bonds link C373–C459 and C404–C409.

This sequence belongs to the glycosyl hydrolase 26 family.

It carries out the reaction Random hydrolysis of (1-&gt;3)-beta-D-glycosidic linkages in (1-&gt;3)-beta-D-xylans.. Completely inhibited by Cu(2+), Hg(2+) and N-bromosuccinimide. Strongly inhibited by Ag(+), Zn(2+) and Pb(2+). Moderately inhibited by Fe(3+), Al(3+), Mn(2+), dithiothreitol and p-chloromercuribenzoic acid. Slightly activated by Mg(2+) and Ca(2+). Unaffected by Na(+), K(+), Ba(2+), EDTA, iodoacetic acid and N-ethylmalaimide. Catalyzes the hydrolysis of beta-1,3-xylan into oligosaccharides, mainly xylotriose and xylobiose with smaller amounts of xylotetraose, xylose, xylopentaose and xylohexaose. Weakly active toward beta-1,3-xylotriose, yielding xylose and xylobiose. Converts beta-1,3-xylotetraose into xylotriose, xylobiose and xylose. Converts beta-1,3-xylopentaose into xylotetraose, xylotriose, xylobiose and xylose. Does not hydrolyze xylobiose, p-nitrophenyl-beta-xyloside, beta-1,4-xylan, curdlan or carboxymethylcellulose. This chain is Beta-1,3-xylanase TXYA, found in Vibrio sp.